The sequence spans 267 residues: Undecaprenyl-diphosphatase (267 aa).

7 consecutive transmembrane segments (helical) span residues Leu7–Leu29, Phe41–Phe61, Leu69–Val89, Leu96–Ile116, Ala173–Ile193, Ile207–Phe227, and Phe239–Leu259.

Belongs to the UppP family.

The protein resides in the cell inner membrane. It carries out the reaction di-trans,octa-cis-undecaprenyl diphosphate + H2O = di-trans,octa-cis-undecaprenyl phosphate + phosphate + H(+). Functionally, catalyzes the dephosphorylation of undecaprenyl diphosphate (UPP). Confers resistance to bacitracin. The protein is Undecaprenyl-diphosphatase of Campylobacter jejuni subsp. jejuni serotype O:6 (strain 81116 / NCTC 11828).